We begin with the raw amino-acid sequence, 122 residues long: MIKKENRNWRRKKRHLSIRKKIYGTVERPRLCVYKSEKHIYAQIIDDDKGHTLVAASTLDKELRETLKKTWNKEAAREVGKLIGKRAIEKGIKKVVFDRGGYRYHGRVAELAEGAREAGLEF.

This sequence belongs to the universal ribosomal protein uL18 family. Part of the 50S ribosomal subunit; part of the 5S rRNA/L5/L18/L25 subcomplex. Contacts the 5S and 23S rRNAs.

Its function is as follows. This is one of the proteins that bind and probably mediate the attachment of the 5S RNA into the large ribosomal subunit, where it forms part of the central protuberance. The polypeptide is Large ribosomal subunit protein uL18 (Thermosipho melanesiensis (strain DSM 12029 / CIP 104789 / BI429)).